The chain runs to 1388 residues: Rho-associated protein kinase 2 (1388 aa).

The disordered stretch occupies residues methionine 1–alanine 24. In terms of domain architecture, Protein kinase spans tyrosine 92 to phenylalanine 354. ATP-binding positions include isoleucine 98–valine 106 and lysine 121. Residue aspartate 214 is the Proton acceptor of the active site. The AGC-kinase C-terminal domain maps to aspartate 357–serine 425. Residues asparagine 363 to valine 784 are interaction with PPP1R12A. The tract at residues proline 373–leucine 420 is interaction with NPM1. A Phosphothreonine; by ROCK2 modification is found at threonine 414. Coiled-coil stretches lie at residues asparagine 439–leucine 1025 and aspartate 1053–aspartate 1131. An REM-1 domain is found at threonine 497–threonine 573. Positions asparagine 512–glutamate 530 are enriched in basic and acidic residues. The segment at asparagine 512–aspartate 532 is disordered. Tyrosine 722 is subject to Phosphotyrosine; by SRC. In terms of domain architecture, RhoBD spans threonine 979–proline 1047. The tract at residues threonine 979–proline 1047 is RHOA binding. Position 1137 is a phosphoserine (serine 1137). The 200-residue stretch at glutamate 1150 to proline 1349 folds into the PH domain. The residue at position 1212 (threonine 1212) is a Phosphothreonine. The segment at glycine 1260 to cysteine 1315 adopts a Phorbol-ester/DAG-type zinc-finger fold. The disordered stretch occupies residues valine 1345–serine 1388. Phosphoserine occurs at positions 1362 and 1374. Positions serine 1362 to arginine 1376 are enriched in polar residues.

It belongs to the protein kinase superfamily. AGC Ser/Thr protein kinase family. In terms of assembly, homodimer. Interacts with IRS1. Interacts with RAF1. Interacts with RHOA (activated by GTP). Interacts with RHOB and RHOC. Interacts with PPP1R12A. Interacts with EP300. Interacts with CHORDC1. Interacts with BRCA2. Interacts with NPM1; this interaction enhances ROCK2 activity. Interacts with SORL1. Interacts with PJVK. Mg(2+) is required as a cofactor. Post-translationally, autophosphorylated. Phosphorylation at Tyr-722 reduces its binding to RHOA and is crucial for focal adhesion dynamics. Dephosphorylation by PTPN11 stimulates its RHOA binding activity. Cleaved by granzyme B during apoptosis. This leads to constitutive activation of the kinase and membrane blebbing. Highly expressed in whole brain and in cerebellum, and at lower levels in heart and lung. Detected at low levels in skeletal muscle, spleen, liver, kidney and pancreas.

It localises to the cytoplasm. It is found in the cell membrane. The protein resides in the nucleus. The protein localises to the cytoskeleton. Its subcellular location is the microtubule organizing center. It localises to the centrosome. It catalyses the reaction L-seryl-[protein] + ATP = O-phospho-L-seryl-[protein] + ADP + H(+). It carries out the reaction L-threonyl-[protein] + ATP = O-phospho-L-threonyl-[protein] + ADP + H(+). Its activity is regulated as follows. Activated by RHOA binding. Inhibited by Y-27632. In terms of biological role, protein kinase which is a key regulator of actin cytoskeleton and cell polarity. Involved in regulation of smooth muscle contraction, actin cytoskeleton organization, stress fiber and focal adhesion formation, neurite retraction, cell adhesion and motility via phosphorylation of ADD1, BRCA2, CNN1, EZR, DPYSL2, EP300, MSN, MYL9/MLC2, NPM1, RDX, PPP1R12A and VIM. Phosphorylates SORL1 and IRF4. Acts as a negative regulator of VEGF-induced angiogenic endothelial cell activation. Positively regulates the activation of p42/MAPK1-p44/MAPK3 and of p90RSK/RPS6KA1 during myogenic differentiation. Plays an important role in the timely initiation of centrosome duplication. Inhibits keratinocyte terminal differentiation. May regulate closure of the eyelids and ventral body wall through organization of actomyosin bundles. Plays a critical role in the regulation of spine and synaptic properties in the hippocampus. Plays an important role in generating the circadian rhythm of the aortic myofilament Ca(2+) sensitivity and vascular contractility by modulating the myosin light chain phosphorylation. This Bos taurus (Bovine) protein is Rho-associated protein kinase 2 (ROCK2).